A 178-amino-acid polypeptide reads, in one-letter code: dCTP deaminase, dUMP-forming (178 aa).

DCTP contacts are provided by residues 96–101 (RSSLGR), D113, 121–123 (TLE), Q142, Y156, and Q163. E123 serves as the catalytic Proton donor/acceptor.

It belongs to the dCTP deaminase family. As to quaternary structure, homotrimer.

The enzyme catalyses dCTP + 2 H2O = dUMP + NH4(+) + diphosphate. It functions in the pathway pyrimidine metabolism; dUMP biosynthesis; dUMP from dCTP: step 1/1. Its function is as follows. Bifunctional enzyme that catalyzes both the deamination of dCTP to dUTP and the hydrolysis of dUTP to dUMP without releasing the toxic dUTP intermediate. The chain is dCTP deaminase, dUMP-forming from Acetivibrio thermocellus (strain ATCC 27405 / DSM 1237 / JCM 9322 / NBRC 103400 / NCIMB 10682 / NRRL B-4536 / VPI 7372) (Clostridium thermocellum).